A 398-amino-acid polypeptide reads, in one-letter code: Phosphoglycerate kinase (398 aa).

Residues 21 to 23 (DFN), R36, 59 to 62 (HLGR), R119, and R157 each bind substrate. ATP-binding positions include K208, G296, E327, and 354–357 (GGDS).

The protein belongs to the phosphoglycerate kinase family. Monomer.

It localises to the cytoplasm. The enzyme catalyses (2R)-3-phosphoglycerate + ATP = (2R)-3-phospho-glyceroyl phosphate + ADP. It functions in the pathway carbohydrate degradation; glycolysis; pyruvate from D-glyceraldehyde 3-phosphate: step 2/5. The polypeptide is Phosphoglycerate kinase (Streptococcus agalactiae serotype III (strain NEM316)).